Consider the following 320-residue polypeptide: o-succinylbenzoate synthase (320 aa).

Lys-133 acts as the Proton donor in catalysis. Positions 161, 190, and 213 each coordinate Mg(2+). The Proton acceptor role is filled by Lys-235.

The protein belongs to the mandelate racemase/muconate lactonizing enzyme family. MenC type 1 subfamily. Requires a divalent metal cation as cofactor.

It catalyses the reaction (1R,6R)-6-hydroxy-2-succinyl-cyclohexa-2,4-diene-1-carboxylate = 2-succinylbenzoate + H2O. The protein operates within quinol/quinone metabolism; 1,4-dihydroxy-2-naphthoate biosynthesis; 1,4-dihydroxy-2-naphthoate from chorismate: step 4/7. It functions in the pathway quinol/quinone metabolism; menaquinone biosynthesis. Functionally, converts 2-succinyl-6-hydroxy-2,4-cyclohexadiene-1-carboxylate (SHCHC) to 2-succinylbenzoate (OSB). This is o-succinylbenzoate synthase from Shigella boydii serotype 18 (strain CDC 3083-94 / BS512).